The following is a 276-amino-acid chain: Pyrroline-5-carboxylate reductase (276 aa).

This sequence belongs to the pyrroline-5-carboxylate reductase family.

The protein localises to the cytoplasm. The enzyme catalyses L-proline + NADP(+) = (S)-1-pyrroline-5-carboxylate + NADPH + 2 H(+). It catalyses the reaction L-proline + NAD(+) = (S)-1-pyrroline-5-carboxylate + NADH + 2 H(+). Its pathway is amino-acid biosynthesis; L-proline biosynthesis; L-proline from L-glutamate 5-semialdehyde: step 1/1. This Arabidopsis thaliana (Mouse-ear cress) protein is Pyrroline-5-carboxylate reductase (PROC1).